Here is a 144-residue protein sequence, read N- to C-terminus: Protein BUD31 homolog (144 aa).

Residues 2-10 (PKVRRSRKP) carry the Nuclear localization signal motif.

This sequence belongs to the BUD31 (G10) family.

It is found in the nucleus. This is Protein BUD31 homolog from Branchiostoma belcheri (Amphioxus).